Consider the following 218-residue polypeptide: UPF0502 protein VS_II0353 (218 aa).

The protein belongs to the UPF0502 family.

The sequence is that of UPF0502 protein VS_II0353 from Vibrio atlanticus (strain LGP32) (Vibrio splendidus (strain Mel32)).